The following is a 164-amino-acid chain: B-phycoerythrin alpha chain (164 aa).

(2R,3E)-phycoerythrobilin-binding residues include Cys82 and Cys139.

Belongs to the phycobiliprotein family. As to quaternary structure, heteromer of 6 alpha, 6 beta and one gamma chain. Contains two covalently linked bilin chromophores.

The protein resides in the plastid. The protein localises to the chloroplast thylakoid membrane. Functionally, light-harvesting photosynthetic bile pigment-protein from the phycobiliprotein complex. In Porphyridium purpureum (Red alga), this protein is B-phycoerythrin alpha chain (cpeA).